Reading from the N-terminus, the 252-residue chain is Chaplin-A (252 aa).

The signal sequence occupies residues 1–20 (MVAAAAATGILSLCGSPALA). A Chaplin 1 domain is found at 31 to 71 (SPGAVSGNALQVPVDVPVNACGNTVDVIAALNPAFGNECEN). Disordered stretches follow at residues 71–121 (NASD…GNNA) and 150–224 (CEND…GSEG). Residues 86–108 (EDASSSSSSSTSASSSGSHADGA) are compositionally biased toward low complexity. Residues 112–152 (SPGVGSGNNAQVPVDVPVNLCGNTVDVIAALNPVFGNKCEN) form the Chaplin 2 domain. A compositionally biased stretch (acidic residues) spans 153–165 (DAEEPPGYGEEEP). Low complexity predominate over residues 210-224 (QTEQPPALAETGSEG). Positions 217 to 221 (LAETG) match the LPXTG sorting signal motif. 2 propeptides (removed by sortase) span residues 219–252 (ETGSEGTLGAAAAGAVLIAGGAILYRRGRALSGR) and 221–252 (GSEGTLGAAAAGAVLIAGGAILYRRGRALSGR). At Thr-220 the chain carries Pentaglycyl murein peptidoglycan amidated threonine.

This sequence belongs to the chaplin family. Long chaplin subfamily.

It localises to the secreted. The protein resides in the cell wall. Functionally, one of 8 partially redundant surface-active proteins required for efficient formation of aerial mycelium; the short chaplins assemble into a hydrophobic, amyloidal fibrillar surface layer that envelopes and protects aerial hyphae and spores, presumably anchored to the long chaplins. Chaplins have an overlapping function with the surface-active SapB peptide; chaplins are essential on minimal medium while on rich medium both chaplins and SapB are required for efficient aerial hyphae formation. A minimal chaplin strain capable of forming aerial mycelium/hyphae on minimal medium contains ChpC, ChpE and ChpH. The strain also has restored rodlet formation on the hyphae surface. A second minimal chaplin strain with ChpA, ChpD and ChpE makes slightly less robust hyphae. The long chaplins (ChpA, ChpB, ChpC) are not absolutely necessary for short chaplin localization or rodlet formation, but probably play a role in initiating aerial hyphae development. Chaplins are also involved in cell attachment to a hydrophobic surface. The sequence is that of Chaplin-A from Streptomyces coelicolor (strain ATCC BAA-471 / A3(2) / M145).